We begin with the raw amino-acid sequence, 668 residues long: MASQFCLPLAPRLSPLKPLKSHFTDFQVGICVAIQRSDKRIHLAVVTEINRENSWVTVEWVEKGVKKGKKIELETVLLLNPALASLEHQRSRRPLRPVSVVPSTAIGDQRTATKWIAMIPHRNETPSGDSQTLMIPSNPCLMKRKKSPCLREIEKLQKQREKRRRLQLEIRARRALDINTGNPNFETMRMIEEYRRRLDSSKMSSLEPPEDHRICVCVRKRPLNQRETTMKDLDIITIPSHNVVMVHESKQKVDLTRYLENQTFCFDHAFDDKASNELVYQFTARPLVESIFRKGMATCFAYGQTGSGKTHTMGGAFLGKAQDCSKGIYALVAQDVFLLLKTPAYEKLELKVYGTFFEIYGGKVYDLLNWKKKLQVLEDGNQQVQVVGLQEQEVSCVEEVLNLVELGNSCRTSGQTSVNAHSSRSHAVFQLILKAGGKLHGKFSLVDLAGNERGADTAKATRKRQLEGAEINKSLLALKECIRALGKNKSHTPFRASKLTQVLRDSFIGQNSYTCMIATISPGMTSCENTLNTLRYANRVKELALEARPYHHCVSPPGHEVPLMIENDNTNSGKSLQRDEVIQIPTVEKEEEKESDELTSKKEPAASWSRSNQWWEAIQETAEGVNGDVDFCIAQSLSVLEQKIGVLTDIQKKLQSLREDLQKKSQVE.

Phosphothreonine; by PLK1 is present on Thr125. The stretch at Cys149 to Asp177 forms a coiled coil. Ser204 bears the Phosphoserine; by PLK1 mark. One can recognise a Kinesin motor domain in the interval Arg213–Leu543. Gly303–Thr310 serves as a coordination point for ATP. A compositionally biased stretch (basic and acidic residues) spans Pro585–Pro604. Residues Pro585 to Ala605 are disordered. Residues Val646–Val667 are a coiled coil.

Belongs to the TRAFAC class myosin-kinesin ATPase superfamily. Kinesin family. MCAK/KIF2 subfamily. In terms of processing, phosphorylation at Thr-125 by PLK1 is required for activity in the correction of kinetochore-microtubules attachment errors, while phosphorylation at Ser-204 also by PLK1 is required for the kinetochore localization and activity in prometaphase.

It localises to the cytoplasm. Its subcellular location is the cytoskeleton. It is found in the microtubule organizing center. The protein resides in the centrosome. The protein localises to the spindle. It localises to the chromosome. Its subcellular location is the centromere. It is found in the kinetochore. Plus end-directed microtubule-dependent motor required for spindle assembly and chromosome movement during mitosis. Has microtubule depolymerization activity. Plays a role in chromosome congression. This chain is Kinesin-like protein KIF2B (Kif2b), found in Mus musculus (Mouse).